The following is a 148-amino-acid chain: Lipoprotein signal peptidase (148 aa).

The next 2 helical transmembrane spans lie at 57-77 and 80-100; these read QWIF…YLNT and VHIF…GNLI. Catalysis depends on residues Asp110 and Asp126. The chain crosses the membrane as a helical span at residues 124–144; it reads IADVFVVVGTVFLCIYVLFFE.

This sequence belongs to the peptidase A8 family.

It is found in the cell membrane. The enzyme catalyses Release of signal peptides from bacterial membrane prolipoproteins. Hydrolyzes -Xaa-Yaa-Zaa-|-(S,diacylglyceryl)Cys-, in which Xaa is hydrophobic (preferably Leu), and Yaa (Ala or Ser) and Zaa (Gly or Ala) have small, neutral side chains.. It functions in the pathway protein modification; lipoprotein biosynthesis (signal peptide cleavage). Its function is as follows. This protein specifically catalyzes the removal of signal peptides from prolipoproteins. This is Lipoprotein signal peptidase from Clostridioides difficile (strain 630) (Peptoclostridium difficile).